The chain runs to 163 residues: Nodulin-13 (163 aa).

Kinetin is bound by residues Gln68 and Tyr82. 2 residues coordinate N(6)-dimethylallyladenine: Gln68 and Tyr82. 3 residues coordinate trans-zeatin: Gln68, Tyr82, and Tyr133.

This sequence belongs to the BetVI family. As to quaternary structure, homodimer. As to expression, expressed in nodules, but not in leaves, stems, flowers and roots. Specifically located in the nodule cortex.

Functionally, may be involved in nodule organogenesis rather in the processes related to nitrogen fixation or interactions with the bacteria. May regulate nodulation by controlling the levels of freely available cytokinins. The protein is Nodulin-13 (N13) of Medicago truncatula (Barrel medic).